The primary structure comprises 765 residues: BRCA1-associated RING domain protein 1 (765 aa).

Residues 20–113 (MEPATDGLWA…KLQNLLHDNK (94 aa)) form a required for BRCA1 binding region. The RING-type zinc finger occupies 44–81 (CSRCANILKEPVCLGGCEHIFCSGCISDCVGSGCPVCY). Residue K152 forms a Glycyl lysine isopeptide (Lys-Gly) (interchain with G-Cter in SUMO2) linkage. Disordered stretches follow at residues 183 to 229 (AVPK…EELK), 299 to 328 (KDLR…GSNI), and 369 to 410 (NASD…MPAR). The span at 195–204 (SAKKHPKKSV) shows a compositional bias: basic residues. Over residues 207-229 (INREENLRPETKDSRFDSKEELK) the composition is skewed to basic and acidic residues. Residues 316 to 328 (PTTSTSDSCGSNI) show a composition bias toward polar residues. S378 carries the phosphoserine modification. Position 381 is a phosphothreonine (T381). The segment covering 391 to 403 (HRQMMSSPSTVKL) has biased composition (polar residues). K411 participates in a covalent cross-link: Glycyl lysine isopeptide (Lys-Gly) (interchain with G-Cter in SUMO2). ANK repeat units follow at residues 415-447 (RGET…VKDH), 448-480 (AGWT…TPGY), and 481-513 (QNDS…AVNI). One copy of the ANK 4; degenerate repeat lies at 514–534 (FGVRPVDYTDNENIRSLLLLP). Residues 542 to 546 (TSQCS) form a flexible linker region. BRCT domains are found at residues 549 to 641 (NTGQ…KYEV) and 655 to 765 (LLPK…PLDS).

As to quaternary structure, homo- and heterodimer. Heterodimer (RING-type zinc finger) with BRCA1. Heterodimer (via ANK repeats and BRCT domains) with CSTF1/CSTF-50. Component of the BRCA1-A complex, at least composed of the BRCA1, BARD1, UIMC1/RAP80, ABRAXAS1, BRCC3/BRCC36, BABAM2 and BABAM1/NBA1. Interacts with UBXN1. Post-translationally, processed during apoptosis. The homodimer is more susceptible to proteolytic cleavage than the BARD1/BRCA1 heterodimer.

The protein localises to the nucleus. Its subcellular location is the cytoplasm. It catalyses the reaction S-ubiquitinyl-[E2 ubiquitin-conjugating enzyme]-L-cysteine + [acceptor protein]-L-lysine = [E2 ubiquitin-conjugating enzyme]-L-cysteine + N(6)-ubiquitinyl-[acceptor protein]-L-lysine.. It participates in protein modification; protein ubiquitination. In terms of biological role, E3 ubiquitin-protein ligase. The BRCA1-BARD1 heterodimer specifically mediates the formation of 'Lys-6'-linked polyubiquitin chains and coordinates a diverse range of cellular pathways such as DNA damage repair, ubiquitination and transcriptional regulation to maintain genomic stability. Plays a central role in the control of the cell cycle in response to DNA damage. Acts by mediating ubiquitin E3 ligase activity that is required for its tumor suppressor function. Also forms a heterodimer with CSTF1/CSTF-50 to modulate mRNA processing and RNAP II stability by inhibiting pre-mRNA 3' cleavage. The sequence is that of BRCA1-associated RING domain protein 1 (Bard1) from Mus musculus (Mouse).